The sequence spans 513 residues: GMP synthase [glutamine-hydrolyzing] (513 aa).

The Glutamine amidotransferase type-1 domain occupies 9-198 (LILVLDFGSQ…VRRVCDCRGQ (190 aa)). The Nucleophile role is filled by cysteine 86. Residues histidine 172 and glutamate 174 contribute to the active site. Residues 199-388 (WTMENFIEIE…LGIPEHLVWR (190 aa)) enclose the GMPS ATP-PPase domain. ATP is bound at residue 226-232 (SGGVDSS).

As to quaternary structure, homodimer.

It carries out the reaction XMP + L-glutamine + ATP + H2O = GMP + L-glutamate + AMP + diphosphate + 2 H(+). The protein operates within purine metabolism; GMP biosynthesis; GMP from XMP (L-Gln route): step 1/1. Catalyzes the synthesis of GMP from XMP. In Staphylococcus aureus (strain USA300), this protein is GMP synthase [glutamine-hydrolyzing].